A 152-amino-acid polypeptide reads, in one-letter code: MFRGASAINLDTKGRIAIPVRYREPLQLEHQGRIVITVDIQSACLLLYPIHEWELIEAKLLKLSDTDKTQRSLKRLLLGYAHEVELDGNGRILLPPPLRQYANLDKRIMLVGQLNKFELWDEQSWLQQIDECLETIRSEELASNERLADFSL.

SpoVT-AbrB domains follow at residues 5 to 52 (ASAI…PIHE) and 81 to 124 (AHEV…DEQS).

This sequence belongs to the MraZ family. Forms oligomers.

The protein resides in the cytoplasm. The protein localises to the nucleoid. The chain is Transcriptional regulator MraZ from Shewanella baltica (strain OS155 / ATCC BAA-1091).